The primary structure comprises 149 residues: Ribosomal RNA large subunit methyltransferase H (149 aa).

S-adenosyl-L-methionine-binding positions include L71, G98, and 117–122; that span reads LSKLTL.

Belongs to the RNA methyltransferase RlmH family. Homodimer.

It is found in the cytoplasm. The enzyme catalyses pseudouridine(1915) in 23S rRNA + S-adenosyl-L-methionine = N(3)-methylpseudouridine(1915) in 23S rRNA + S-adenosyl-L-homocysteine + H(+). Functionally, specifically methylates the pseudouridine at position 1915 (m3Psi1915) in 23S rRNA. The chain is Ribosomal RNA large subunit methyltransferase H from Campylobacter jejuni subsp. doylei (strain ATCC BAA-1458 / RM4099 / 269.97).